The sequence spans 347 residues: DNA-directed RNA polymerase subunit alpha (347 aa).

The alpha N-terminal domain (alpha-NTD) stretch occupies residues 1–243 (MLIKQGERLI…DQISVFINFD (243 aa)). Residues 260 to 347 (VNEHLFKSID…EWKRKQQNEA (88 aa)) are alpha C-terminal domain (alpha-CTD).

This sequence belongs to the RNA polymerase alpha chain family. Homodimer. The RNAP catalytic core consists of 2 alpha, 1 beta, 1 beta' and 1 omega subunit. When a sigma factor is associated with the core the holoenzyme is formed, which can initiate transcription.

The catalysed reaction is RNA(n) + a ribonucleoside 5'-triphosphate = RNA(n+1) + diphosphate. Its function is as follows. DNA-dependent RNA polymerase catalyzes the transcription of DNA into RNA using the four ribonucleoside triphosphates as substrates. The sequence is that of DNA-directed RNA polymerase subunit alpha from Desulfovibrio desulfuricans (strain ATCC 27774 / DSM 6949 / MB).